The primary structure comprises 343 residues: Undecaprenyl-diphosphatase 2 (343 aa).

The next 4 helical transmembrane spans lie at 21 to 41 (LFPV…GGSW), 57 to 77 (PYLT…LVFF), 104 to 124 (LAWL…ALEH), and 129 to 149 (LFAK…ILLA). Residues 179-193 (VPAPATVPTQTTSAP) are compositionally biased toward low complexity. Residues 179-202 (VPAPATVPTQTTSAPGGRATARHT) are disordered. Helical transmembrane passes span 225–245 (AGVI…RSGI), 265–285 (FLLA…ALAG), 294–314 (QVIL…RFLV), and 322–342 (LTPF…RFAI).

Belongs to the UppP family.

The protein localises to the cell membrane. It carries out the reaction di-trans,octa-cis-undecaprenyl diphosphate + H2O = di-trans,octa-cis-undecaprenyl phosphate + phosphate + H(+). Catalyzes the dephosphorylation of undecaprenyl diphosphate (UPP). Confers resistance to bacitracin. This chain is Undecaprenyl-diphosphatase 2, found in Frankia alni (strain DSM 45986 / CECT 9034 / ACN14a).